Here is a 56-residue protein sequence, read N- to C-terminus: Cytochrome b-c1 complex subunit 10 (56 aa).

Topologically, residues 1–12 are mitochondrial matrix; sequence MLTRFLGPRYRQ. The chain crosses the membrane as a helical span at residues 13–35; it reads LARNWVPTASLWGAVGAVGLVWA. Over 36 to 56 the chain is Mitochondrial intermembrane; the sequence is TDWRLILDWVPYINGKFKKDD.

It belongs to the UQCR11/QCR10 family. In terms of assembly, component of the ubiquinol-cytochrome c oxidoreductase (cytochrome b-c1 complex, complex III, CIII), a multisubunit enzyme composed of 11 subunits. The complex is composed of 3 respiratory subunits cytochrome b, cytochrome c1 and Rieske protein UQCRFS1, 2 core protein subunits UQCRC1/QCR1 and UQCRC2/QCR2, and 6 low-molecular weight protein subunits UQCRH/QCR6, UQCRB/QCR7, UQCRQ/QCR8, UQCR10/QCR9, UQCR11/QCR10 and subunit 9, the cleavage product of Rieske protein UQCRFS1. The complex exists as an obligatory dimer and forms supercomplexes (SCs) in the inner mitochondrial membrane with NADH-ubiquinone oxidoreductase (complex I, CI) and cytochrome c oxidase (complex IV, CIV), resulting in different assemblies (supercomplex SCI(1)III(2)IV(1) and megacomplex MCI(2)III(2)IV(2)).

It is found in the mitochondrion inner membrane. Component of the ubiquinol-cytochrome c oxidoreductase, a multisubunit transmembrane complex that is part of the mitochondrial electron transport chain which drives oxidative phosphorylation. The respiratory chain contains 3 multisubunit complexes succinate dehydrogenase (complex II, CII), ubiquinol-cytochrome c oxidoreductase (cytochrome b-c1 complex, complex III, CIII) and cytochrome c oxidase (complex IV, CIV), that cooperate to transfer electrons derived from NADH and succinate to molecular oxygen, creating an electrochemical gradient over the inner membrane that drives transmembrane transport and the ATP synthase. The cytochrome b-c1 complex catalyzes electron transfer from ubiquinol to cytochrome c, linking this redox reaction to translocation of protons across the mitochondrial inner membrane, with protons being carried across the membrane as hydrogens on the quinol. In the process called Q cycle, 2 protons are consumed from the matrix, 4 protons are released into the intermembrane space and 2 electrons are passed to cytochrome c. QCR10 has a role in CIII assembly and RIP1 stability. This is Cytochrome b-c1 complex subunit 10 (UQCR11) from Bos taurus (Bovine).